The chain runs to 347 residues: GMP reductase (347 aa).

108 to 131 is an NADP(+) binding site; the sequence is ADFQKTKDIMALTDDLIFICIDIA. K(+) contacts are provided by Gly181 and Gly183. The active-site Thioimidate intermediate is the Cys186. 216–239 lines the NADP(+) pocket; sequence IIGDGGCSCAGDVSKAFGGGADFV.

This sequence belongs to the IMPDH/GMPR family. GuaC type 1 subfamily. As to quaternary structure, homotetramer.

The enzyme catalyses IMP + NH4(+) + NADP(+) = GMP + NADPH + 2 H(+). Its function is as follows. Catalyzes the irreversible NADPH-dependent deamination of GMP to IMP. It functions in the conversion of nucleobase, nucleoside and nucleotide derivatives of G to A nucleotides, and in maintaining the intracellular balance of A and G nucleotides. This chain is GMP reductase, found in Aliivibrio fischeri (strain ATCC 700601 / ES114) (Vibrio fischeri).